Reading from the N-terminus, the 427-residue chain is Peptidase B (427 aa).

Mn(2+)-binding residues include Lys195 and Asp200. Lys207 is an active-site residue. Mn(2+) is bound by residues Asp218, Asp277, and Glu279. Arg281 is a catalytic residue.

The protein belongs to the peptidase M17 family. In terms of assembly, homohexamer. Mn(2+) is required as a cofactor.

It localises to the cytoplasm. The enzyme catalyses Release of an N-terminal amino acid, Xaa, from a peptide or arylamide. Xaa is preferably Glu or Asp but may be other amino acids, including Leu, Met, His, Cys and Gln.. Probably plays an important role in intracellular peptide degradation. This chain is Peptidase B, found in Escherichia coli O157:H7.